The following is a 278-amino-acid chain: Large ribosomal subunit protein uL2 (278 aa).

The disordered stretch occupies residues 222-278; that stretch reads GVVMNPVDHPHGGGEGRTSGGRHPVTPWGKPTKGAKTRKNKSTDKFIIRSRHERKKR. Residues 269–278 show a composition bias toward basic residues; sequence IRSRHERKKR.

This sequence belongs to the universal ribosomal protein uL2 family. In terms of assembly, part of the 50S ribosomal subunit. Forms a bridge to the 30S subunit in the 70S ribosome.

Functionally, one of the primary rRNA binding proteins. Required for association of the 30S and 50S subunits to form the 70S ribosome, for tRNA binding and peptide bond formation. It has been suggested to have peptidyltransferase activity; this is somewhat controversial. Makes several contacts with the 16S rRNA in the 70S ribosome. The sequence is that of Large ribosomal subunit protein uL2 from Maricaulis maris (strain MCS10) (Caulobacter maris).